The sequence spans 524 residues: 56 kDa type-specific antigen (524 aa).

An N-terminal signal peptide occupies residues 1–22; that stretch reads MKKIMLIASAMSALSLPFSASA. A helical membrane pass occupies residues 67–87; the sequence is LTTGLPFGGTLAAGMTIAPGF. 2 disordered regions span residues 112–132 and 387–422; these read SKGEIKADSGGGTDTPIRKRF and EKLAAQQEEDAKNQGEGDCKQQQGASEKSKEGKGKE. Composition is skewed to basic and acidic residues over residues 395-405 and 413-422; these read EDAKNQGEGDC and EKSKEGKGKE. Residues 472–492 form a helical membrane-spanning segment; that stretch reads TGMVASGALGVAINAAEGVYV.

It is found in the cell membrane. In terms of biological role, may be an adherent factor for rickettsial adsorption to the host-cell surface and a determinant of virulence of individual rickettsial strain. It is the major outer membrane protein. The polypeptide is 56 kDa type-specific antigen (Orientia tsutsugamushi (Rickettsia tsutsugamushi)).